A 328-amino-acid chain; its full sequence is Arabinose 5-phosphate isomerase KdsD (328 aa).

The SIS domain occupies 42 to 184 (CEKMFWCKGK…AVALLKARGF (143 aa)). Substrate is bound by residues 75 to 76 (GT), His-82, His-88, 114 to 123 (ALIPVLKRLH), 148 to 150 (KVA), Thr-222, and Asp-275. His-82 is a Zn(2+) binding site. Positions 210–268 (MHTGDEIPHVKKTASLRDALLEVTRKNLGMTVICDDNMMIEGIFTDGDLRRVFDMGVDV) constitute a CBS 1 domain. Positions 277 to 328 (MTPGGIRVRPGILAVEALNLMQSRHITSVMVADGDHLLGVLHMHDLLRAGVV) constitute a CBS 2 domain.

The protein belongs to the SIS family. GutQ/KpsF subfamily. As to quaternary structure, homotetramer.

It catalyses the reaction D-arabinose 5-phosphate = D-ribulose 5-phosphate. Its pathway is carbohydrate biosynthesis; 3-deoxy-D-manno-octulosonate biosynthesis; 3-deoxy-D-manno-octulosonate from D-ribulose 5-phosphate: step 1/3. It functions in the pathway bacterial outer membrane biogenesis; lipopolysaccharide biosynthesis. Its function is as follows. Involved in the biosynthesis of 3-deoxy-D-manno-octulosonate (KDO), a unique 8-carbon sugar component of lipopolysaccharides (LPSs). Catalyzes the reversible aldol-ketol isomerization between D-ribulose 5-phosphate (Ru5P) and D-arabinose 5-phosphate (A5P). The chain is Arabinose 5-phosphate isomerase KdsD (kdsD) from Escherichia coli O157:H7.